We begin with the raw amino-acid sequence, 309 residues long: Aspartate carbamoyltransferase catalytic subunit (309 aa).

Arg55 and Thr56 together coordinate carbamoyl phosphate. Residue Lys85 participates in L-aspartate binding. Carbamoyl phosphate contacts are provided by Arg106, His135, and Gln138. Positions 168 and 230 each coordinate L-aspartate. Carbamoyl phosphate contacts are provided by Leu268 and Pro269.

Belongs to the aspartate/ornithine carbamoyltransferase superfamily. ATCase family. In terms of assembly, heterododecamer (2C3:3R2) of six catalytic PyrB chains organized as two trimers (C3), and six regulatory PyrI chains organized as three dimers (R2).

The catalysed reaction is carbamoyl phosphate + L-aspartate = N-carbamoyl-L-aspartate + phosphate + H(+). It participates in pyrimidine metabolism; UMP biosynthesis via de novo pathway; (S)-dihydroorotate from bicarbonate: step 2/3. In terms of biological role, catalyzes the condensation of carbamoyl phosphate and aspartate to form carbamoyl aspartate and inorganic phosphate, the committed step in the de novo pyrimidine nucleotide biosynthesis pathway. This is Aspartate carbamoyltransferase catalytic subunit from Wigglesworthia glossinidia brevipalpis.